A 477-amino-acid chain; its full sequence is Myosin-binding protein H (477 aa).

A disordered region spans residues 1–73 (MMEKNTSEGP…APPSEDVPSA (73 aa)). Phosphothreonine is present on residues Thr-6 and Thr-26. Residues 73–168 (APLLLTLDDV…LDQPIHIREN (96 aa)) form the Fibronectin type-III 1 domain. The 89-residue stretch at 172-260 (PKIRVPRHLR…EDLEAKAVID (89 aa)) folds into the Ig-like C2-type 1 domain. One can recognise a Fibronectin type-III 2 domain in the interval 269–364 (PPSSIRLLDV…TKELAHIQKA (96 aa)). Positions 382-466 (PSFTQPLADH…INVLGEASVD (85 aa)) constitute an Ig-like C2-type 2 domain.

It belongs to the immunoglobulin superfamily. MyBP family. As to expression, mainly expressed in the skeletal muscle. Slightly expressed in the left atrium and arteria mammaria interna.

In terms of biological role, binds to myosin; probably involved in interaction with thick myofilaments in the A-band. This Homo sapiens (Human) protein is Myosin-binding protein H (MYBPH).